A 541-amino-acid polypeptide reads, in one-letter code: Atlastin-3 (541 aa).

A disordered region spans residues 1–22 (MLSPQRTAAVASRGAGDAMENG). The interval 1-25 (MLSPQRTAAVASRGAGDAMENGKPG) is N-terminal hypervariable region (HVR). The Cytoplasmic portion of the chain corresponds to 1–445 (MLSPQRTAAV…NVFSTFRTPA (445 aa)). Positions 57–305 (DLDVVVVSVA…LIPYVLNPSK (249 aa)) constitute a GB1/RHD3-type G domain. GDP contacts are provided by R70, K71, G72, K73, S74, F75, and R109. D142 is a Mg(2+) binding site. Positions 213, 214, 272, and 275 each coordinate GDP. The tract at residues 343–434 (MLQATAEANN…YENFCKHNGS (92 aa)) is 3HB (three-helix bundle) domain. K391 is subject to N6-acetyllysine. The chain crosses the membrane as a helical span at residues 446 to 466 (VLFTGIAALYIASGFTGFIGL). Residue E467 is a topological domain, lumenal. Residues 468 to 488 (VVAQLFNCMVGLLLIALLTWG) traverse the membrane as a helical segment. Residues 489–541 (YIRYSGQYRELGGAIDSGAAYVLEQASSHIGNSTQAAVRDAVVGRPPADKKSQ) lie on the Cytoplasmic side of the membrane.

Belongs to the TRAFAC class dynamin-like GTPase superfamily. GB1/RHD3 GTPase family. GB1 subfamily. As to quaternary structure, monomeric and homodimeric. The homodimer, transiently formed by two molecules on opposing membranes, is the active form mediating ER membrane fusion. Interacts with ZFYVE27; both proteins are involved in endoplasmic reticulum tubular network organization. Interacts with REEP5; both proteins are involved in endoplasmic reticulum tubular network organization. As to expression, expressed in cardiomyocytes (at protein level).

Its subcellular location is the endoplasmic reticulum membrane. The catalysed reaction is GTP + H2O = GDP + phosphate + H(+). Functionally, atlastin-3 (ATL3) is a membrane-anchored GTPase that mediates the GTP-dependent fusion of endoplasmic reticulum (ER) membranes, maintaining the continuous ER network. It facilitates the formation of three-way junctions where ER tubules intersect. Two atlastin-3 on neighboring ER tubules bind GTP and form loose homodimers through the GB1/RHD3-type G domains and 3HB regions. Upon GTP hydrolysis, the 3HB regions tighten, pulling the membranes together to drive their fusion. After fusion, the homodimer disassembles upon release of inorganic phosphate (Pi). Subsequently, GDP dissociates, resetting the monomers to a conformation ready for a new fusion cycle. In Mus musculus (Mouse), this protein is Atlastin-3.